The primary structure comprises 176 residues: Peptide deformylase (176 aa).

2 residues coordinate Fe cation: cysteine 92 and histidine 134. Glutamate 135 is an active-site residue. Histidine 138 is a Fe cation binding site.

The protein belongs to the polypeptide deformylase family. Requires Fe(2+) as cofactor.

The catalysed reaction is N-terminal N-formyl-L-methionyl-[peptide] + H2O = N-terminal L-methionyl-[peptide] + formate. In terms of biological role, removes the formyl group from the N-terminal Met of newly synthesized proteins. Requires at least a dipeptide for an efficient rate of reaction. N-terminal L-methionine is a prerequisite for activity but the enzyme has broad specificity at other positions. The sequence is that of Peptide deformylase from Acinetobacter baumannii (strain SDF).